The chain runs to 600 residues: Adenine deaminase 3 (600 aa).

The protein belongs to the metallo-dependent hydrolases superfamily. Adenine deaminase family. Mn(2+) serves as cofactor.

The enzyme catalyses adenine + H2O + H(+) = hypoxanthine + NH4(+). The sequence is that of Adenine deaminase 3 from Rhizobium johnstonii (strain DSM 114642 / LMG 32736 / 3841) (Rhizobium leguminosarum bv. viciae).